The primary structure comprises 132 residues: Small ribosomal subunit protein uS8 (132 aa).

The protein belongs to the universal ribosomal protein uS8 family. Part of the 30S ribosomal subunit. Contacts proteins S5 and S12.

Functionally, one of the primary rRNA binding proteins, it binds directly to 16S rRNA central domain where it helps coordinate assembly of the platform of the 30S subunit. The sequence is that of Small ribosomal subunit protein uS8 from Mycobacterium bovis (strain ATCC BAA-935 / AF2122/97).